The chain runs to 360 residues: DNA replication and repair protein RecF (360 aa).

30–37 (GANGSGKT) is an ATP binding site.

Belongs to the RecF family.

Its subcellular location is the cytoplasm. Its function is as follows. The RecF protein is involved in DNA metabolism; it is required for DNA replication and normal SOS inducibility. RecF binds preferentially to single-stranded, linear DNA. It also seems to bind ATP. The protein is DNA replication and repair protein RecF of Acinetobacter baumannii (strain AB307-0294).